The primary structure comprises 278 residues: Cysteine-rich repeat secretory protein 18 (278 aa).

Residues 1–32 (MYSSSSVSKRFVLVPIVVVVTTQLLLVRNVSS) form the signal peptide. Gnk2-homologous domains are found at residues 39 to 147 (YLHH…SLDT) and 160 to 267 (PSAK…LYPF).

Belongs to the cysteine-rich repeat secretory protein family.

The protein resides in the secreted. The polypeptide is Cysteine-rich repeat secretory protein 18 (CRRSP18) (Arabidopsis thaliana (Mouse-ear cress)).